The sequence spans 714 residues: Transcription factor SFL2 (714 aa).

The DNA-binding element occupies 15-134 (AFVHKLYTML…LVYIKRRSSS (120 aa)). Disordered stretches follow at residues 187–467 (YYQQ…VGVT), 565–658 (STSV…NNTN), and 670–714 (SHSQ…NMNK). Composition is skewed to pro residues over residues 193-207 (GQVP…PPHQ) and 223-235 (QPPP…PPQP). Polar residues predominate over residues 266-275 (LDQTQPLSYT). Residues 276–285 (PQLEYQQQQY) are compositionally biased toward low complexity. Over residues 286 to 296 (PQPPLPPPPPQ) the composition is skewed to pro residues. Polar residues-rich tracts occupy residues 310–321 (DNLSRPSPNEQH) and 354–372 (SEGS…LNNE). The segment covering 376–389 (ESSTSSSSTTVTST) has biased composition (low complexity). Polar residues-rich tracts occupy residues 413 to 435 (SRMN…TQNG) and 444 to 461 (LIPS…TGTD). A compositionally biased stretch (low complexity) spans 574 to 591 (GPFSTSTSTSTTSPTLSS). The segment covering 599–608 (EPQNSTIANG) has biased composition (polar residues). Composition is skewed to low complexity over residues 609–641 (TSIR…RQLS) and 648–658 (QQQQQPNNNTN). The span at 703-714 (SKSDDDTDNMNK) shows a compositional bias: basic and acidic residues.

Belongs to the HSF family.

It is found in the nucleus. Functionally, transcription factor that plays a role of activator of filamentous growth and which is involved in invasive growth at a high temperature. Required for human oral epithelium colonization and damage. Promotes filamentous growth in EFG1- and FLO8-dependent manners. Antagonizes functions of SFL1. In Candida albicans (strain SC5314 / ATCC MYA-2876) (Yeast), this protein is Transcription factor SFL2 (SFL2).